The primary structure comprises 162 residues: Ribosomal RNA large subunit methyltransferase H (162 aa).

Residues Leu78 and Gly110 each coordinate S-adenosyl-L-methionine.

Belongs to the RNA methyltransferase RlmH family. Homodimer.

Its subcellular location is the cytoplasm. It carries out the reaction pseudouridine(1915) in 23S rRNA + S-adenosyl-L-methionine = N(3)-methylpseudouridine(1915) in 23S rRNA + S-adenosyl-L-homocysteine + H(+). Functionally, specifically methylates the pseudouridine at position 1915 (m3Psi1915) in 23S rRNA. The sequence is that of Ribosomal RNA large subunit methyltransferase H from Bradyrhizobium sp. (strain ORS 278).